We begin with the raw amino-acid sequence, 88 residues long: Elongation factor 1-beta (88 aa).

Belongs to the EF-1-beta/EF-1-delta family.

Functionally, promotes the exchange of GDP for GTP in EF-1-alpha/GDP, thus allowing the regeneration of EF-1-alpha/GTP that could then be used to form the ternary complex EF-1-alpha/GTP/AAtRNA. This Archaeoglobus fulgidus (strain ATCC 49558 / DSM 4304 / JCM 9628 / NBRC 100126 / VC-16) protein is Elongation factor 1-beta (ef1b).